A 619-amino-acid chain; its full sequence is TBC domain-containing protein C1952.17c (619 aa).

One can recognise a Rab-GAP TBC domain in the interval 34–387 (PDEYSLRAKA…RLWDSIIADQ (354 aa)).

It is found in the cytoplasm. Functionally, may act as a GTPase-activating protein for Rab family protein(s). The chain is TBC domain-containing protein C1952.17c from Schizosaccharomyces pombe (strain 972 / ATCC 24843) (Fission yeast).